We begin with the raw amino-acid sequence, 339 residues long: MGDRHTIQQNLNGLLSKLNDPDPDMRYMSLNDLYGILSNPCSSYLAHDQASATRLAEGLLKALDDQHGDVQNQALKCLGPLVARLPLEGLRTLLERLSNLTTSQTIDTSVPNTALRVIVTALPRPQPNQAPSPDANMAYSAVSEVLIPRLIGPGPHKRRGSVTKGMLEKDPAKGFSSDAIDVLIQVASCFGALLQESELTALEKAVMSIIDNDTAGTVVTKRALAAISALVVYFSDEQFGILVSELVERFNSPQLSTVHRRHLIAAVGCLARTVPAKFGPHLSTLAPFIFSAVGEDNLEVSHVLHYLCTSASNVYSSRNKPKIYHQYRQLPKEKLITGM.

HEAT repeat units follow at residues 5 to 42 (HTIQ…NPCS) and 50 to 87 (ASAT…RLPL).

In terms of assembly, interacts with candA-C. Interacts with unneddylated cullins culA and culD; interaction occurs only when complexed with candA-C.

It is found in the nucleus. Assembly factor of SCF (SKP1-CUL1-F-box protein) E3 ubiquitin ligase complexes that promotes the exchange of the substrate-recognition F-box subunit in SCF complexes, thereby playing a key role in the cellular repertoire of SCF complexes. Acts as a F-box protein exchange factor when interacting with candA-C. In Emericella nidulans (strain FGSC A4 / ATCC 38163 / CBS 112.46 / NRRL 194 / M139) (Aspergillus nidulans), this protein is Cullin-associated NEDD8-dissociated protein 1, N-terminal part (candA-N).